Reading from the N-terminus, the 304-residue chain is Coenzyme PQQ synthesis protein B (304 aa).

Belongs to the PqqB family.

It functions in the pathway cofactor biosynthesis; pyrroloquinoline quinone biosynthesis. Its function is as follows. May be involved in the transport of PQQ or its precursor to the periplasm. This is Coenzyme PQQ synthesis protein B from Azoarcus sp. (strain BH72).